The following is a 576-amino-acid chain: Zinc finger protein 791 (576 aa).

The KRAB domain maps to 4-90; that stretch reads VAFEDVSVSF…AENFSPNLSV (87 aa). 17 consecutive C2H2-type zinc fingers follow at residues 100-122, 132-154, 160-182, 188-210, 216-238, 244-266, 272-294, 300-322, 328-350, 356-378, 384-406, 412-434, 440-462, 468-490, 496-518, 524-546, and 552-574; these read YECT…MRSH, YKCK…ERSH, YKCK…ERTH, YECK…ERIH, YECK…ERTH, YACK…MITH, YKCK…ERIH, YKCK…VRVH, YECK…KRNH, YECK…MITH, YKCR…ERTH, YECK…KRTH, YECK…MRMH, YKCK…TRIH, and LECK…MRMH.

The protein belongs to the krueppel C2H2-type zinc-finger protein family.

It localises to the nucleus. In terms of biological role, may be involved in transcriptional regulation. The sequence is that of Zinc finger protein 791 (ZNF791) from Homo sapiens (Human).